Consider the following 273-residue polypeptide: Type II pantothenate kinase (273 aa).

Residue 8–15 coordinates ATP; the sequence is DAGGTLTK. Residue Glu76 is the Proton acceptor of the active site. Residues Thr105, 127-131, Phe143, and Ser230 each bind ATP; that span reads GGTIM.

The protein belongs to the type II pantothenate kinase family. In terms of assembly, homodimer.

It localises to the cytoplasm. The enzyme catalyses (R)-pantothenate + ATP = (R)-4'-phosphopantothenate + ADP + H(+). Its pathway is cofactor biosynthesis; coenzyme A biosynthesis; CoA from (R)-pantothenate: step 1/5. Its function is as follows. Catalyzes the phosphorylation of pantothenate (Pan), the first step in CoA biosynthesis. This Bacillus cereus (strain ATCC 14579 / DSM 31 / CCUG 7414 / JCM 2152 / NBRC 15305 / NCIMB 9373 / NCTC 2599 / NRRL B-3711) protein is Type II pantothenate kinase.